The sequence spans 105 residues: ESAT-6-like protein EsxU (105 aa).

The protein belongs to the WXG100 family. CFP-10 subfamily. Forms a tight 1:1 complex with EsxT. Complex formation results in induction of alpha-helical conformation and stability against chemical denaturation.

It localises to the secreted. This chain is ESAT-6-like protein EsxU, found in Mycobacterium tuberculosis (strain ATCC 25618 / H37Rv).